The following is a 117-amino-acid chain: Transcription elongation factor A protein-like 8 (117 aa).

The tract at residues 1–82 is disordered; sequence MQKSCDENEG…EEVIRGVDEL (82 aa). Basic and acidic residues predominate over residues 41-82; that stretch reads NVREETEGSHRGEPAEPSPEPKEDTPARHLNPEEVIRGVDEL. Residues 73–100 adopt a coiled-coil conformation; it reads EEVIRGVDELERLREEIRRVRNKFVLMH.

The protein belongs to the TFS-II family. TFA subfamily.

The protein localises to the nucleus. In terms of biological role, may be involved in transcriptional regulation. The protein is Transcription elongation factor A protein-like 8 (Tceal8) of Mus musculus (Mouse).